Consider the following 334-residue polypeptide: Lipoyl synthase (334 aa).

Positions 1–36 are disordered; that stretch reads MSDALIAPNASSSEAPQSPAEHYDPTRKQKSADKTA. Residues 7–20 show a composition bias toward low complexity; the sequence is APNASSSEAPQSPA. Over residues 21 to 36 the composition is skewed to basic and acidic residues; it reads EHYDPTRKQKSADKTA. [4Fe-4S] cluster contacts are provided by C81, C86, C92, C107, C111, C114, and S321. A Radical SAM core domain is found at 92–310; that stretch reads CFGKGTATFM…EEEAYKMGFT (219 aa).

It belongs to the radical SAM superfamily. Lipoyl synthase family. [4Fe-4S] cluster serves as cofactor.

The protein localises to the cytoplasm. It carries out the reaction [[Fe-S] cluster scaffold protein carrying a second [4Fe-4S](2+) cluster] + N(6)-octanoyl-L-lysyl-[protein] + 2 oxidized [2Fe-2S]-[ferredoxin] + 2 S-adenosyl-L-methionine + 4 H(+) = [[Fe-S] cluster scaffold protein] + N(6)-[(R)-dihydrolipoyl]-L-lysyl-[protein] + 4 Fe(3+) + 2 hydrogen sulfide + 2 5'-deoxyadenosine + 2 L-methionine + 2 reduced [2Fe-2S]-[ferredoxin]. Its pathway is protein modification; protein lipoylation via endogenous pathway; protein N(6)-(lipoyl)lysine from octanoyl-[acyl-carrier-protein]: step 2/2. In terms of biological role, catalyzes the radical-mediated insertion of two sulfur atoms into the C-6 and C-8 positions of the octanoyl moiety bound to the lipoyl domains of lipoate-dependent enzymes, thereby converting the octanoylated domains into lipoylated derivatives. The sequence is that of Lipoyl synthase from Cupriavidus taiwanensis (strain DSM 17343 / BCRC 17206 / CCUG 44338 / CIP 107171 / LMG 19424 / R1) (Ralstonia taiwanensis (strain LMG 19424)).